The chain runs to 330 residues: Aspartate--ammonia ligase (330 aa).

This sequence belongs to the class-II aminoacyl-tRNA synthetase family. AsnA subfamily.

Its subcellular location is the cytoplasm. The enzyme catalyses L-aspartate + NH4(+) + ATP = L-asparagine + AMP + diphosphate + H(+). Its pathway is amino-acid biosynthesis; L-asparagine biosynthesis; L-asparagine from L-aspartate (ammonia route): step 1/1. The protein is Aspartate--ammonia ligase of Salmonella paratyphi A (strain ATCC 9150 / SARB42).